Here is a 120-residue protein sequence, read N- to C-terminus: Non-specific lipid-transfer protein 6 (120 aa).

The first 26 residues, 1–26, serve as a signal peptide directing secretion; sequence MARSMSLKLACVVVLCLLVDAPLAQG. Intrachain disulfides connect Cys-57–Cys-102 and Cys-77–Cys-116.

The protein belongs to the plant LTP family. In terms of tissue distribution, specifically expressed in fiber cells.

In terms of biological role, plant non-specific lipid-transfer proteins transfer phospholipids as well as galactolipids across membranes. May play a role in wax or cutin deposition in the cell walls of expanding epidermal cells and certain secretory tissues. The sequence is that of Non-specific lipid-transfer protein 6 (LTP6) from Gossypium hirsutum (Upland cotton).